Here is a 542-residue protein sequence, read N- to C-terminus: MFSLQKKALQHIYMTPEDASDLTNDLLQHLGLYWNGPIIKMDTVVHLHNKMFSNQSVLKYALAKQANIKILETLVLWVEPEYALAQALKHNRKDVIECIFSHHLTTPSYHHIMHLTSSQELFEFFHLFICKSKNYHARMECLLYAATLYNFQNILEKNREYIVRHSIGNALFAIACKERHIHLIAWFATAGVFDTYDDSTLFNTAFRLGDYSLLEVACDLPITYPDHLIISMMQTAIQKNYFRFFKKLLTHFNVYRPIIITDAAYYNRRKILLLLFNQNIFNNFTILCALSAAIKGHASKKTLNLLINRLDAQMTVIDSVYYSIVKYNNIDCIPLLRHLKTFRIETLLSIAIHNNNIDIITACKAFLSKDKLYYLVLKMAIISRNDKLFKLYTEQENPMYIFTTMKTIISDLISHTVFQALAIECLREFHQEKQLPIASLLMVLAEHNYITKFKKACYAANMSDQKVKQALIKCLFIAAQKNCCQIFKYCFGSLLKVLSKHERNKFFNAVVFARKLASYDDHQEMIHLIDSLIKGFRYLIKD.

This sequence belongs to the asfivirus MGF 505 family.

Its function is as follows. Plays a role in virus cell tropism, and may be required for efficient virus replication in macrophages. The protein is Protein MGF 505-11L of African swine fever virus (isolate Pig/Kenya/KEN-50/1950) (ASFV).